Reading from the N-terminus, the 305-residue chain is Maximins-S type B/C (305 aa).

The signal sequence occupies residues 1–18; sequence MNFNYFILVLFFITSGHA. 2 consecutive propeptides follow at residues 19–35 and 52–65; these read KSET…HIKR and SAEE…LVTR. Residue Asn83 is modified to Asparagine amide. Residues 87 to 100 constitute a propeptide that is removed on maturation; the sequence is SAEEQDLAEHLVTR. An Asparagine amide modification is found at Asn118. The propeptide occupies 122–135; sequence SAEEQDLAEDLVTR. Residue Lys153 is modified to Lysine amide. Residues 157–170 constitute a propeptide that is removed on maturation; it reads SAEDQDLAEDLVTR. Asn188 bears the Asparagine amide mark. The propeptide occupies 192–205; sequence SAEEQDLAEHLVTR. At Asn223 the chain carries Asparagine amide. Residues 227 to 240 constitute a propeptide that is removed on maturation; that stretch reads SAEEQDLSEDLVTR. Asparagine amide is present on Asn258. Positions 262-275 are excised as a propeptide; it reads SAEEQDLVEDLVTR. Lys293 carries the lysine amide modification. A propeptide spanning residues 297 to 305 is cleaved from the precursor; it reads SAEQEKDMK.

The protein belongs to the maximin-S family. In terms of tissue distribution, expressed by the skin dorsal glands.

It is found in the secreted. Functionally, maximin-S1 has no antimicrobial activity. Has no hemolytic activity. In terms of biological role, maximin-S2 has an activity against mycoplasma but has no activity against common Gram-positive and Gram-negative bacteria nor fungi. Has no hemolytic activity. Maximin-S3 has an activity against mycoplasma but has no activity against common Gram-positive and Gram-negative bacteria nor fungi. Has no hemolytic activity. Its function is as follows. Maximin-S4 has an activity against mycoplasma but has no activity against common Gram-positive and Gram-negative bacteria nor fungi. Has no hemolytic activity. Functionally, maximin-S5 has an activity against mycoplasma but has no activity against common Gram-positive and Gram-negative bacteria nor fungi. Has no hemolytic activity. The sequence is that of Maximins-S type B/C from Bombina maxima (Giant fire-bellied toad).